The sequence spans 152 residues: Ribosome maturation factor RimP (152 aa).

It belongs to the RimP family.

The protein resides in the cytoplasm. Functionally, required for maturation of 30S ribosomal subunits. This Aeromonas salmonicida (strain A449) protein is Ribosome maturation factor RimP.